We begin with the raw amino-acid sequence, 154 residues long: Methylglyoxal synthase (154 aa).

The MGS-like domain maps to methionine 1–lysine 154. Residues histidine 19, lysine 23, threonine 45–threonine 48, and serine 65–glycine 66 contribute to the substrate site. Aspartate 71 acts as the Proton donor/acceptor in catalysis. Histidine 98 provides a ligand contact to substrate.

Belongs to the methylglyoxal synthase family.

The enzyme catalyses dihydroxyacetone phosphate = methylglyoxal + phosphate. Catalyzes the formation of methylglyoxal from dihydroxyacetone phosphate. In Yersinia pseudotuberculosis serotype O:1b (strain IP 31758), this protein is Methylglyoxal synthase.